The chain runs to 459 residues: Aluminum-activated malate transporter 1 (459 aa).

The Extracellular segment spans residues 1–52; that stretch reads MDIDHGRESDGEMVGTIASCGLLLHSLLAGLGRRAAGFARKVGGAAREDPRR. A run of 2 helical transmembrane segments spans residues 53-73 and 74-94; these read VAHSLKVGLALALVSVVYFVT and PLFNGLGVSAIWAVLTVVVVM. The Extracellular segment spans residues 95–108; sequence EYTVGATLSKGLNR. Residues 109 to 129 form a helical membrane-spanning segment; sequence ALATLVAGCIAVGAHQLAELA. Over 130 to 137 the chain is Cytoplasmic; that stretch reads ERCGDQGE. Residues 138-158 traverse the membrane as a helical segment; that stretch reads PIVLTVLVFFVASAATFLRFI. Residues 159-160 lie on the Extracellular side of the membrane; the sequence is PE. Residues 161–181 traverse the membrane as a helical segment; it reads IKAKYDYGVTIFILTFGLVAV. Over 182–199 the chain is Cytoplasmic; it reads SSYRVEELIQLAHQRFYT. A helical transmembrane segment spans residues 200–220; sequence IAVGVFICLCTTVFLFPVWAG. Residues 221-459 lie on the Extracellular side of the membrane; sequence EDVHKLASGN…DEPLPDVVIL (239 aa).

Belongs to the aromatic acid exporter (TC 2.A.85) family. As to expression, detected in root tips.

The protein resides in the cell membrane. With respect to regulation, activated by external aluminum. The enhancement of malate transport is not due to alteration in the selectivity properties but is due to an increased anion permeability. Functionally, malate transporter critical for aluminum tolerance. Permeable to chloride, nitrate, sulfate and malate. In Triticum aestivum (Wheat), this protein is Aluminum-activated malate transporter 1 (ALMT1).